The following is a 297-amino-acid chain: Non-homologous end-joining factor 1 (297 aa).

The tract at residues 1–131 (MDARLLQLPW…ATVSTVCRHL (131 aa)) is globular head. Residues 220–286 (PKAPTHPKEE…LTHRPPAGAS (67 aa)) form a C-terminal tail region. Residues 222–297 (APTHPKEEDT…PKKKAKGLFM (76 aa)) form a disordered region. Polar residues predominate over residues 232–255 (GNSASHRPMAESSSISFEKTVPTQ). The segment covering 263–286 (VSEPSQVPQSSVSCLTHRPPAGAS) has biased composition (low complexity). The XLM motif lies at 287-297 (KPKKKAKGLFM). A compositionally biased stretch (basic residues) spans 287–297 (KPKKKAKGLFM).

It belongs to the XRCC4-XLF family. XLF subfamily. As to quaternary structure, homodimer. Interacts with xrcc4; the interaction is direct and is mediated via a head-to-head interaction between N-terminal head regions. Component of the core long-range non-homologous end joining (NHEJ) complex (also named DNA-PK complex) composed of prkdc/DNA-PKcs, lig4, xrcc4, xrcc6/Ku70, xrcc5/Ku80 and nhej1/xlf.

It is found in the nucleus. In terms of biological role, DNA repair protein involved in DNA non-homologous end joining (NHEJ); required for double-strand break (DSB) repair and V(D)J recombination. It is also involved in telomere maintenance. Plays a key role in NHEJ by promoting the ligation of various mismatched and non-cohesive ends. In some studies, has been shown to associate with xrcc4 to form alternating helical filaments that bridge DNA and act like a bandage, holding together the broken DNA until it is repaired. Alternatively, it has also been shown that rather than forming filaments, a single nhej1 dimer interacts through both head domains with xrcc4 to promote the close alignment of DNA ends. The xrcc4-nhej1/xlf subcomplex binds to the DNA fragments of a DSB in a highly diffusive manner and robustly bridges two independent DNA molecules, holding the broken DNA fragments in close proximity to one other. The mobility of the bridges ensures that the ends remain accessible for further processing by other repair factors. This is Non-homologous end-joining factor 1 from Xenopus laevis (African clawed frog).